A 309-amino-acid chain; its full sequence is Homoserine kinase (309 aa).

91-101 (PIGSGLGSSAC) provides a ligand contact to ATP.

The protein belongs to the GHMP kinase family. Homoserine kinase subfamily.

The protein resides in the cytoplasm. The catalysed reaction is L-homoserine + ATP = O-phospho-L-homoserine + ADP + H(+). The protein operates within amino-acid biosynthesis; L-threonine biosynthesis; L-threonine from L-aspartate: step 4/5. Functionally, catalyzes the ATP-dependent phosphorylation of L-homoserine to L-homoserine phosphate. The chain is Homoserine kinase from Buchnera aphidicola subsp. Acyrthosiphon pisum (strain 5A).